The following is a 1297-amino-acid chain: Probable bifunctional E2/E3 enzyme R795 (1297 aa).

An RING-type; atypical zinc finger spans residues 74–128; that stretch reads CAICRYQENEPCIEHKSSESNTKCPIAQSVSCSHSFHACCISRWLHTKKTCPLCN. In terms of domain architecture, U-box spans 678-750; the sequence is EPLQEFLCPI…RDWKENNTVI (73 aa). Residues 899 to 1082 form the VWFA domain; that stretch reads EMTLEIHSSN…LDIMELETMI (184 aa). Residues 1133 to 1279 enclose the UBC core domain; that stretch reads QKLIRVQREI…IIDYVNKFAL (147 aa). The active-site Glycyl thioester intermediate is the Cys1217.

This sequence in the C-terminal section; belongs to the ubiquitin-conjugating enzyme family.

The catalysed reaction is S-ubiquitinyl-[E2 ubiquitin-conjugating enzyme]-L-cysteine + [acceptor protein]-L-lysine = [E2 ubiquitin-conjugating enzyme]-L-cysteine + N(6)-ubiquitinyl-[acceptor protein]-L-lysine.. It catalyses the reaction S-ubiquitinyl-[E1 ubiquitin-activating enzyme]-L-cysteine + [E2 ubiquitin-conjugating enzyme]-L-cysteine = [E1 ubiquitin-activating enzyme]-L-cysteine + S-ubiquitinyl-[E2 ubiquitin-conjugating enzyme]-L-cysteine.. The protein operates within protein modification; protein ubiquitination. Functionally, catalyzes the covalent attachment of ubiquitin to other proteins. Also acts as an E3 ubiquitin-protein ligase. The protein is Probable bifunctional E2/E3 enzyme R795 of Acanthamoeba polyphaga (Amoeba).